A 309-amino-acid chain; its full sequence is Taste receptor type 2 member 8 (309 aa).

The Extracellular portion of the chain corresponds to 1 to 7 (MFSPADN). The helical transmembrane segment at 8–28 (IFIILITGEFILGILGNGYIA) threads the bilayer. The Cytoplasmic segment spans residues 29–50 (LVNWIDWIKKKKISTVDYILTN). A helical membrane pass occupies residues 51-71 (LVIARICLISVMVVNGIVIVL). Topologically, residues 72–82 (NPDVYTKNKQQ) are extracellular. A helical membrane pass occupies residues 83–103 (IVIFTFWTFANYLNMWITTCL). Residues 104–131 (NVFYFLKIASSSHPLFLWLKWKIDMVVH) are Cytoplasmic-facing. Residues 132 to 152 (WILLGCFAISLLVSLIAAIVL) traverse the membrane as a helical segment. Residues 153-184 (SCDYRFHAIAKHKRNITEMFXVSKIPYFEPLT) are Extracellular-facing. Asparagine 167 carries N-linked (GlcNAc...) asparagine glycosylation. A helical transmembrane segment spans residues 185-205 (LFNLFAIVPFIVSLISFFLLV). Over 206 to 239 (RSLWRHTKQIKLYATGSRDPSTEVHVRAIKTMTS) the chain is Cytoplasmic. Residues 240–260 (FIFFFFLYFISSILMTFSYLM) form a helical membrane-spanning segment. At 261–266 (TKYKLA) the chain is on the extracellular side. A helical membrane pass occupies residues 267-287 (VEFGEIAAILYPLGHSLILIV). Residues 288-309 (LNNKLRQIFVRMLTCRKIACVI) are Cytoplasmic-facing.

Belongs to the G-protein coupled receptor T2R family.

It localises to the membrane. In terms of biological role, receptor that may play a role in the perception of bitterness and is gustducin-linked. May play a role in sensing the chemical composition of the gastrointestinal content. The activity of this receptor may stimulate alpha gustducin, mediate PLC-beta-2 activation and lead to the gating of TRPM5. This Pan troglodytes (Chimpanzee) protein is Taste receptor type 2 member 8 (TAS2R8).